The sequence spans 156 residues: MSNICWICNDTCDERNNFCICSEEYKIVHLKCMQSWINYSKKVECDLCKNKYNIKKSYHYFSRWKWCFSDKKTVLSKILFIFFAVGFIFITTSMSSNVASLVTRIDDTFFDVVFLTVYISMILVTVCLCVFVLALAVDFLLDAKEKNSFLTIKEIV.

An RING-CH-type zinc finger spans residues 1-55 (MSNICWICNDTCDERNNFCICSEEYKIVHLKCMQSWINYSKKVECDLCKNKYNIK). Residues 1–73 (MSNICWICND…WKWCFSDKKT (73 aa)) lie on the Cytoplasmic side of the membrane. The Zn(2+) site is built by C5, C8, C19, C21, H29, C32, C45, and C48. Residues 74 to 94 (VLSKILFIFFAVGFIFITTSM) traverse the membrane as a helical segment. Residues 95–116 (SSNVASLVTRIDDTFFDVVFLT) lie on the Lumenal side of the membrane. The chain crosses the membrane as a helical span at residues 117–137 (VYISMILVTVCLCVFVLALAV). At 138 to 156 (DFLLDAKEKNSFLTIKEIV) the chain is on the cytoplasmic side.

This sequence belongs to the poxviridae LAP protein family.

The protein resides in the host membrane. It is found in the host Golgi apparatus. It localises to the host trans-Golgi network membrane. Its subcellular location is the host early endosome membrane. The catalysed reaction is S-ubiquitinyl-[E2 ubiquitin-conjugating enzyme]-L-cysteine + [acceptor protein]-L-lysine = [E2 ubiquitin-conjugating enzyme]-L-cysteine + N(6)-ubiquitinyl-[acceptor protein]-L-lysine.. Its function is as follows. E3 ubiquitin-protein ligase which promotes ubiquitination and subsequent degradation of host MHC-I and CD4 molecules, presumably to prevent lysis of infected cells by cytotoxic T-lymphocytes and NK cell. Binds target molecules through transmembrane interaction. The result of this ubiquitination is the enhancement of the endocytosis of the target chain and the delivery to the lysosome, where it is proteolytically destroyed. The protein is E3 ubiquitin-protein ligase LAP (LAP) of Yaba monkey tumor virus (strain VR587) (YMTV).